Consider the following 226-residue polypeptide: UPF0758 protein SPT_1135 (226 aa).

An MPN domain is found at 103-225 (SILSSQKLAK…YFSYREKTDL (123 aa)). His174, His176, and Asp187 together coordinate Zn(2+). Residues 174-187 (HNHPSGAVAPSQND) carry the JAMM motif motif.

It belongs to the UPF0758 family.

This chain is UPF0758 protein SPT_1135, found in Streptococcus pneumoniae (strain Taiwan19F-14).